The following is a 200-amino-acid chain: Recombination protein RecR (200 aa).

The C4-type zinc finger occupies 58–73; it reads CQVCGNMDTENICGIC. The region spanning 81–176 is the Toprim domain; sequence SVIAIVETVA…KISRLASGIP (96 aa).

This sequence belongs to the RecR family.

Functionally, may play a role in DNA repair. It seems to be involved in an RecBC-independent recombinational process of DNA repair. It may act with RecF and RecO. This is Recombination protein RecR from Rickettsia bellii (strain OSU 85-389).